Here is a 68-residue protein sequence, read N- to C-terminus: DNA-directed RNA polymerase subunit omega (68 aa).

It belongs to the RNA polymerase subunit omega family. The RNAP catalytic core consists of 2 alpha, 1 beta, 1 beta' and 1 omega subunit. When a sigma factor is associated with the core the holoenzyme is formed, which can initiate transcription.

It catalyses the reaction RNA(n) + a ribonucleoside 5'-triphosphate = RNA(n+1) + diphosphate. Functionally, promotes RNA polymerase assembly. Latches the N- and C-terminal regions of the beta' subunit thereby facilitating its interaction with the beta and alpha subunits. In Alkaliphilus metalliredigens (strain QYMF), this protein is DNA-directed RNA polymerase subunit omega.